Consider the following 429-residue polypeptide: Adenylosuccinate synthetase (429 aa).

Residues 12–18 (GDEGKGK) and 40–42 (GHT) contribute to the GTP site. The active-site Proton acceptor is aspartate 13. Residues aspartate 13 and glycine 40 each coordinate Mg(2+). IMP contacts are provided by residues 13–16 (DEGK), 38–41 (NAGH), threonine 129, arginine 143, glutamine 223, threonine 238, and arginine 302. Histidine 41 (proton donor) is an active-site residue. 298 to 304 (VVTGRKR) serves as a coordination point for substrate. GTP is bound by residues arginine 304, 330 to 332 (KLD), and 412 to 414 (STS).

The protein belongs to the adenylosuccinate synthetase family. Homodimer. The cofactor is Mg(2+).

Its subcellular location is the cytoplasm. The catalysed reaction is IMP + L-aspartate + GTP = N(6)-(1,2-dicarboxyethyl)-AMP + GDP + phosphate + 2 H(+). It functions in the pathway purine metabolism; AMP biosynthesis via de novo pathway; AMP from IMP: step 1/2. Plays an important role in the de novo pathway of purine nucleotide biosynthesis. Catalyzes the first committed step in the biosynthesis of AMP from IMP. The chain is Adenylosuccinate synthetase from Brucella abortus (strain 2308).